The sequence spans 309 residues: Dihydroorotate dehydrogenase B (NAD(+)), catalytic subunit (309 aa).

Residues Ser-21 and Lys-45–Ala-46 each bind FMN. Substrate contacts are provided by residues Lys-45 and Asn-69–Leu-73. 2 residues coordinate FMN: Asn-99 and Asn-127. Residue Asn-127 participates in substrate binding. Residue Cys-130 is the Nucleophile of the active site. 2 residues coordinate FMN: Lys-165 and Ile-191. Asn-192–Thr-193 lines the substrate pocket. FMN is bound by residues Gly-217, Gly-243 to Gly-244, and Gly-265 to Thr-266.

It belongs to the dihydroorotate dehydrogenase family. Type 1 subfamily. Heterotetramer of 2 PyrK and 2 PyrD type B subunits. FMN serves as cofactor.

It localises to the cytoplasm. The catalysed reaction is (S)-dihydroorotate + NAD(+) = orotate + NADH + H(+). It participates in pyrimidine metabolism; UMP biosynthesis via de novo pathway; orotate from (S)-dihydroorotate (NAD(+) route): step 1/1. Catalyzes the conversion of dihydroorotate to orotate with NAD(+) as electron acceptor. This Bacillus cereus (strain AH187) protein is Dihydroorotate dehydrogenase B (NAD(+)), catalytic subunit (pyrD).